A 168-amino-acid chain; its full sequence is Lipoprotein signal peptidase (168 aa).

3 consecutive transmembrane segments (helical) span residues 15–35 (AIAA…LGLL), 69–89 (WGRW…AVWV), and 95–115 (PLLA…NLID). Active-site residues include Asp124 and Asp141. A helical membrane pass occupies residues 133–153 (FPWVFNIADSGISVGVALLLL).

It belongs to the peptidase A8 family.

It localises to the cell inner membrane. It carries out the reaction Release of signal peptides from bacterial membrane prolipoproteins. Hydrolyzes -Xaa-Yaa-Zaa-|-(S,diacylglyceryl)Cys-, in which Xaa is hydrophobic (preferably Leu), and Yaa (Ala or Ser) and Zaa (Gly or Ala) have small, neutral side chains.. It functions in the pathway protein modification; lipoprotein biosynthesis (signal peptide cleavage). This protein specifically catalyzes the removal of signal peptides from prolipoproteins. The sequence is that of Lipoprotein signal peptidase from Caulobacter vibrioides (strain ATCC 19089 / CIP 103742 / CB 15) (Caulobacter crescentus).